The following is a 121-amino-acid chain: Small ribosomal subunit protein uS13 (121 aa).

The interval 89-121 is disordered; sequence MRHRRGLPVRGQHTKNNARTRKGKKVSIAGRKK.

It belongs to the universal ribosomal protein uS13 family. In terms of assembly, part of the 30S ribosomal subunit. Forms a loose heterodimer with protein S19. Forms two bridges to the 50S subunit in the 70S ribosome.

Located at the top of the head of the 30S subunit, it contacts several helices of the 16S rRNA. In the 70S ribosome it contacts the 23S rRNA (bridge B1a) and protein L5 of the 50S subunit (bridge B1b), connecting the 2 subunits; these bridges are implicated in subunit movement. Contacts the tRNAs in the A and P-sites. This Pediococcus pentosaceus (strain ATCC 25745 / CCUG 21536 / LMG 10740 / 183-1w) protein is Small ribosomal subunit protein uS13.